The chain runs to 210 residues: Troponin I, cardiac muscle (210 aa).

Residues 1–43 (MADGSSDAAREPRPAPAPIRRRSSNYRAYATEPHAKKKSKISA) are disordered. Ala-2 carries the post-translational modification N-acetylalanine. Residues Ser-5 and Ser-6 each carry the phosphoserine modification. 2 positions are modified to phosphoserine; by PKA and PKD/PRKD1: Ser-23 and Ser-24. At Tyr-26 the chain carries Phosphotyrosine. Thr-31 carries the post-translational modification Phosphothreonine; by STK4/MST1. The tract at residues 32–79 (EPHAKKKSKISASRKLQLKTLLLQIAKQELEREAEERRGEKGRALSTR) is involved in binding TNC. Ser-42 and Ser-44 each carry phosphoserine; by PKC/PRKCE. At Thr-51 the chain carries Phosphothreonine; by STK4/MST1. Residue Ser-77 is modified to Phosphoserine. At Thr-78 the chain carries Phosphothreonine. 2 positions are modified to phosphothreonine; by STK4/MST1: Thr-129 and Thr-143. Residues 129 to 149 (TQKIFDLRGKFKRPTLRRVRI) form an involved in binding TNC and actin region. Residue Ser-150 is modified to Phosphoserine; by PAK3. Ser-166 is subject to Phosphoserine. Phosphothreonine is present on Thr-181. Residue Ser-199 is modified to Phosphoserine.

The protein belongs to the troponin I family. In terms of assembly, binds to actin and tropomyosin. Interacts with TRIM63. Interacts with STK4/MST1. Post-translationally, phosphorylated at Ser-42 and Ser-44 by PRKCE; phosphorylation increases myocardium contractile dysfunction. Phosphorylated at Ser-23 and Ser-24 by PRKD1; phosphorylation reduces myofilament calcium sensitivity. Phosphorylated preferentially at Thr-31. Phosphorylation by STK4/MST1 alters its binding affinity to TNNC1 (cardiac Tn-C) and TNNT2 (cardiac Tn-T).

Its function is as follows. Troponin I is the inhibitory subunit of troponin, the thin filament regulatory complex which confers calcium-sensitivity to striated muscle actomyosin ATPase activity. This is Troponin I, cardiac muscle (TNNI3) from Homo sapiens (Human).